The chain runs to 197 residues: MAVNRTPVLKRCRSLEMDPVYLGIDKKSRRKAKNAGRKVSEYGMQLREKQKAKFIYGVLEKPFRNYYKKAERQKGMTGENLMIMLELRLDNVLFRLGFARTRKEARQIVDHKHVLVNGKCVNIPSYLVKAGDVIEIREKSKSSARYKEILESTNGRLVPEWLEADADALKGSVKSIPTREVIDVPVNEMLIVELYSK.

An S4 RNA-binding domain is found at 87-147 (LRLDNVLFRL…EKSKSSARYK (61 aa)).

Belongs to the universal ribosomal protein uS4 family. In terms of assembly, part of the 30S ribosomal subunit. Contacts protein S5. The interaction surface between S4 and S5 is involved in control of translational fidelity.

One of the primary rRNA binding proteins, it binds directly to 16S rRNA where it nucleates assembly of the body of the 30S subunit. In terms of biological role, with S5 and S12 plays an important role in translational accuracy. In Lachnospira eligens (strain ATCC 27750 / DSM 3376 / VPI C15-48 / C15-B4) (Eubacterium eligens), this protein is Small ribosomal subunit protein uS4.